We begin with the raw amino-acid sequence, 301 residues long: Acetylglutamate kinase (301 aa).

Substrate contacts are provided by residues 72 to 73 (GG), arginine 94, and asparagine 199.

It belongs to the acetylglutamate kinase family. ArgB subfamily.

It is found in the cytoplasm. The catalysed reaction is N-acetyl-L-glutamate + ATP = N-acetyl-L-glutamyl 5-phosphate + ADP. The protein operates within amino-acid biosynthesis; L-arginine biosynthesis; N(2)-acetyl-L-ornithine from L-glutamate: step 2/4. Its function is as follows. Catalyzes the ATP-dependent phosphorylation of N-acetyl-L-glutamate. The sequence is that of Acetylglutamate kinase from Bartonella henselae (strain ATCC 49882 / DSM 28221 / CCUG 30454 / Houston 1) (Rochalimaea henselae).